A 295-amino-acid polypeptide reads, in one-letter code: 5,10-methylenetetrahydrofolate reductase (295 aa).

The Proton donor/acceptor role is filled by E28. T59 contributes to the NADH binding site. The FAD site is built by H89, R119, G120, D121, A133, Y153, H157, A160, D166, N169, R172, and K173. Position 121 (D121) interacts with (6S)-5-methyl-5,6,7,8-tetrahydrofolate. An NADH-binding site is contributed by Q184. The (6S)-5-methyl-5,6,7,8-tetrahydrofolate site is built by Q184, Q220, and K280.

The protein belongs to the methylenetetrahydrofolate reductase family. FAD serves as cofactor.

It catalyses the reaction (6S)-5-methyl-5,6,7,8-tetrahydrofolate + NAD(+) = (6R)-5,10-methylene-5,6,7,8-tetrahydrofolate + NADH + H(+). Its pathway is one-carbon metabolism; tetrahydrofolate interconversion. The protein operates within amino-acid biosynthesis; L-methionine biosynthesis via de novo pathway. Functionally, catalyzes the NADH-dependent reduction of 5,10-methylenetetrahydrofolate to 5-methyltetrahydrofolate. Is required to provide the methyl group necessary for methionine synthetase to convert homocysteine to methionine; the methyl group is given by 5-methyltetrahydrofolate. This is 5,10-methylenetetrahydrofolate reductase (metF) from Buchnera aphidicola subsp. Baizongia pistaciae (strain Bp).